The chain runs to 95 residues: Co-chaperonin GroES (95 aa).

The protein belongs to the GroES chaperonin family. In terms of assembly, heptamer of 7 subunits arranged in a ring. Interacts with the chaperonin GroEL.

The protein resides in the cytoplasm. In terms of biological role, together with the chaperonin GroEL, plays an essential role in assisting protein folding. The GroEL-GroES system forms a nano-cage that allows encapsulation of the non-native substrate proteins and provides a physical environment optimized to promote and accelerate protein folding. GroES binds to the apical surface of the GroEL ring, thereby capping the opening of the GroEL channel. The protein is Co-chaperonin GroES of Rickettsia prowazekii (strain Madrid E).